The chain runs to 338 residues: Anthranilate phosphoribosyltransferase (338 aa).

5-phospho-alpha-D-ribose 1-diphosphate contacts are provided by residues Gly81, 84-85, Thr89, 91-94, 109-117, and Ala121; these read GD, NIST, and KHGNRNLSS. Gly81 contributes to the anthranilate binding site. Ser93 is a Mg(2+) binding site. Residue Asn112 participates in anthranilate binding. Arg167 is an anthranilate binding site. Mg(2+)-binding residues include Asp226 and Glu227.

It belongs to the anthranilate phosphoribosyltransferase family. As to quaternary structure, homodimer. Mg(2+) serves as cofactor.

The catalysed reaction is N-(5-phospho-beta-D-ribosyl)anthranilate + diphosphate = 5-phospho-alpha-D-ribose 1-diphosphate + anthranilate. It functions in the pathway amino-acid biosynthesis; L-tryptophan biosynthesis; L-tryptophan from chorismate: step 2/5. In terms of biological role, catalyzes the transfer of the phosphoribosyl group of 5-phosphorylribose-1-pyrophosphate (PRPP) to anthranilate to yield N-(5'-phosphoribosyl)-anthranilate (PRA). The protein is Anthranilate phosphoribosyltransferase of Cereibacter sphaeroides (strain ATCC 17023 / DSM 158 / JCM 6121 / CCUG 31486 / LMG 2827 / NBRC 12203 / NCIMB 8253 / ATH 2.4.1.) (Rhodobacter sphaeroides).